A 250-amino-acid polypeptide reads, in one-letter code: Small ribosomal subunit protein uS3z (250 aa).

The KH type-2 domain occupies 21–92 (LNEVLTRELA…SVELYAEKVN (72 aa)).

Belongs to the universal ribosomal protein uS3 family. Interacts with SNRNP35.

This is Small ribosomal subunit protein uS3z (RPS3A) from Arabidopsis thaliana (Mouse-ear cress).